Consider the following 535-residue polypeptide: uncharacterized protein (535 aa).

WD repeat units lie at residues 189–226 (RDDF…TRVL), 228–267 (ESIY…PRIS), 269–314 (HHPG…AVLV), 320–359 (AHDE…QPLY), 362–404 (QQNA…KIDE), and 462–505 (VHSV…SWHN).

It belongs to the WD repeat CDC20/Fizzy family.

This is an uncharacterized protein from Schizosaccharomyces pombe (strain 972 / ATCC 24843) (Fission yeast).